The primary structure comprises 273 residues: Large ribosomal subunit protein uL2cz/uL2cy (273 aa).

2 disordered regions span residues 1-22 and 225-273; these read MAKH…DRQV and PVDH…RRRK.

The protein belongs to the universal ribosomal protein uL2 family. As to quaternary structure, part of the 50S ribosomal subunit.

Its subcellular location is the plastid. It localises to the chloroplast. This Saccharum hybrid (Sugarcane) protein is Large ribosomal subunit protein uL2cz/uL2cy (rpl2-A).